The primary structure comprises 231 residues: Eukaryotic translation initiation factor 4E allele A (231 aa).

The segment covering 1-20 (MAAAEMERTTSFDAAEKLKA) has biased composition (basic and acidic residues). Residues 1–36 (MAAAEMERTTSFDAAEKLKAADAGGGEVDDELEEGE) are disordered. Residues 27 to 36 (EVDDELEEGE) show a composition bias toward acidic residues. EIF4G-binding regions lie at residues 56–59 (HPLE) and 66–102 (FDSPIAKSRQTAWGSSLRNVYTFSTVEDFWGAYNNIH). MRNA-binding positions include 74-79 (RQTAWG), Lys106, and 124-125 (WE). Cys129 and Cys167 are oxidised to a cystine. An EIF4G-binding region spans residues 150–159 (YTLLAMIGHQ). MRNA-binding positions include 174 to 179 (RSKGEK) and 219 to 223 (KRLDR).

Belongs to the eukaryotic initiation factor 4E family. EIF4F is a multi-subunit complex, the composition of which varies with external and internal environmental conditions. It is composed of at least EIF4A, EIF4E and EIF4G. EIF4E is also known to interact with other partners. In higher plants two isoforms of EIF4F have been identified, named isoform EIF4F and isoform EIF(iso)4F. Isoform EIF4F has subunits p220 and p26, whereas isoform EIF(iso)4F has subunits p82 and p28. In terms of assembly, (Microbial infection) Interacts with viral genome-linked protein (VPg); this interaction is possible in susceptible hosts but impaired in resistant plants. Post-translationally, according to the redox status, the Cys-129-Cys-167 disulfide bridge may have a role in regulating protein function by affecting its ability to bind capped mRNA.

The protein resides in the nucleus. The protein localises to the cytoplasm. Functionally, component of the protein complex eIF4F, which is involved in the recognition of the mRNA cap, ATP-dependent unwinding of 5'-terminal secondary structure and recruitment of mRNA to the ribosome. Recognizes and binds the 7-methylguanosine-containing mRNA cap during an early step in the initiation of protein synthesis and facilitates ribosome binding by inducing the unwinding of the mRNAs secondary structures. Key component of recessive resistance to potyviruses. Its function is as follows. (Microbial infection) Susceptibility host factor required for viral infection (e.g. Potato virus Y (PVY)) by recruiting viral RNAs to the host ribosomal complex via an interaction with viral genome-linked protein (VPg). This is Eukaryotic translation initiation factor 4E allele A from Solanum tuberosum (Potato).